A 312-amino-acid polypeptide reads, in one-letter code: 6-hydroxy-3-succinoylpyridine 3-monooxygenase HspA (312 aa).

The 197-residue stretch at 14–210 (IYIDGYNFYY…RSANTDLIKF (197 aa)) folds into the NYN domain.

It catalyses the reaction 4-(6-hydroxypyridin-3-yl)-4-oxobutanoate + 2 NADH + O2 + 2 H(+) = 2,5-dihydroxypyridine + succinate semialdehyde + 2 NAD(+) + H2O. It participates in alkaloid degradation; nicotine degradation. Functionally, involved in the nicotine degradation. Catalyzes the cleavage of 6-hydroxy-3-succinoylpyridine (HSP) by incorporation of oxygen at the 3-position to produce to 2,5-dihydroxypyridine (DHP) and succinic semialdehyde. The polypeptide is 6-hydroxy-3-succinoylpyridine 3-monooxygenase HspA (Pseudomonas putida (strain DSM 28022 / S16)).